A 405-amino-acid chain; its full sequence is Na(+)/H(+) antiporter NhaA 1 (405 aa).

The next 11 helical transmembrane spans lie at 20–40 (FVSD…AMIV), 68–88 (LHLW…GLEV), 105–125 (LPVL…VGVV), 134–154 (GWAI…GLLG), 163–183 (LFLL…IAAF), 186–206 (ANLK…MVGM), 214–234 (IWPY…SGVH), 263–283 (GLAP…NAGV), 301–321 (IAAG…VAAV), 334–354 (WIEI…SLFI), and 371–391 (IGIL…LRLT).

The protein belongs to the NhaA Na(+)/H(+) (TC 2.A.33) antiporter family.

Its subcellular location is the cell inner membrane. The catalysed reaction is Na(+)(in) + 2 H(+)(out) = Na(+)(out) + 2 H(+)(in). Its function is as follows. Na(+)/H(+) antiporter that extrudes sodium in exchange for external protons. In Erythrobacter litoralis (strain HTCC2594), this protein is Na(+)/H(+) antiporter NhaA 1.